The primary structure comprises 131 residues: Small ribosomal subunit protein bS6 (131 aa).

Positions 98-131 (EASPMVKAKDERRERREDFANETADDSEAGDSEE) are disordered. Positions 104-116 (KAKDERRERREDF) are enriched in basic and acidic residues. Positions 120-131 (TADDSEAGDSEE) are enriched in acidic residues.

This sequence belongs to the bacterial ribosomal protein bS6 family.

In terms of biological role, binds together with bS18 to 16S ribosomal RNA. In Klebsiella pneumoniae subsp. pneumoniae (strain ATCC 700721 / MGH 78578), this protein is Small ribosomal subunit protein bS6.